The sequence spans 280 residues: Ribosomal RNA large subunit methyltransferase J (280 aa).

S-adenosyl-L-methionine is bound by residues histidine 19, histidine 42, serine 100, glutamate 118, 143-144, and aspartate 164; that span reads DG. Residue aspartate 164 is the Proton acceptor of the active site.

This sequence belongs to the RlmJ family. As to quaternary structure, monomer.

The catalysed reaction is adenosine(2030) in 23S rRNA + S-adenosyl-L-methionine = N(6)-methyladenosine(2030) in 23S rRNA + S-adenosyl-L-homocysteine + H(+). Its function is as follows. Specifically methylates the adenine in position 2030 of 23S rRNA. Nascent 23S rRNA seems to be the natural substrate. Appears to be not necessary for ribosome assembly. Required for the utilization of extracellular DNA as the sole source of carbon and energy. The sequence is that of Ribosomal RNA large subunit methyltransferase J from Escherichia coli (strain K12).